A 200-amino-acid chain; its full sequence is 5'(3')-deoxyribonucleotidase, cytosolic type (200 aa).

The active-site Nucleophile is Asp12. Mg(2+) is bound by residues Asp12 and Asp14. Residue Asp14 is the Proton donor of the active site. Substrate-binding residues include Phe20, Phe46, Tyr67, and Thr101. Phosphothreonine is present on Thr102. Position 136 (Lys136) interacts with substrate. Asp147 contributes to the Mg(2+) binding site. A Phosphoserine modification is found at Ser184.

The protein belongs to the 5'(3')-deoxyribonucleotidase family. Homodimer. Requires Mg(2+) as cofactor.

It localises to the cytoplasm. Dephosphorylates the 5' and 2'(3')-phosphates of deoxyribonucleotides, with a preference for dUMP and dTMP, intermediate activity towards dGMP, and low activity towards dCMP and dAMP. The polypeptide is 5'(3')-deoxyribonucleotidase, cytosolic type (Nt5c) (Mus musculus (Mouse)).